Consider the following 218-residue polypeptide: Ribosomal RNA small subunit methyltransferase G (218 aa).

Residues Gly-82, Leu-87, 137–138 (VE), and Arg-152 each bind S-adenosyl-L-methionine.

The protein belongs to the methyltransferase superfamily. RNA methyltransferase RsmG family.

The protein resides in the cytoplasm. It carries out the reaction guanosine(527) in 16S rRNA + S-adenosyl-L-methionine = N(7)-methylguanosine(527) in 16S rRNA + S-adenosyl-L-homocysteine. Specifically methylates the N7 position of guanine in position 527 of 16S rRNA. The sequence is that of Ribosomal RNA small subunit methyltransferase G from Herminiimonas arsenicoxydans.